The primary structure comprises 122 residues: Holo-[acyl-carrier-protein] synthase (122 aa).

The Mg(2+) site is built by Asp-8 and Glu-60.

The protein belongs to the P-Pant transferase superfamily. AcpS family. It depends on Mg(2+) as a cofactor.

It is found in the cytoplasm. It carries out the reaction apo-[ACP] + CoA = holo-[ACP] + adenosine 3',5'-bisphosphate + H(+). Its function is as follows. Transfers the 4'-phosphopantetheine moiety from coenzyme A to a Ser of acyl-carrier-protein. The chain is Holo-[acyl-carrier-protein] synthase from Anaplasma phagocytophilum (strain HZ).